The chain runs to 180 residues: Large ribosomal subunit protein uL5 (180 aa).

This sequence belongs to the universal ribosomal protein uL5 family. In terms of assembly, part of the 50S ribosomal subunit; part of the 5S rRNA/L5/L18/L25 subcomplex. Contacts the 5S rRNA and the P site tRNA. Forms a bridge to the 30S subunit in the 70S ribosome.

This is one of the proteins that bind and probably mediate the attachment of the 5S RNA into the large ribosomal subunit, where it forms part of the central protuberance. In the 70S ribosome it contacts protein S13 of the 30S subunit (bridge B1b), connecting the 2 subunits; this bridge is implicated in subunit movement. Contacts the P site tRNA; the 5S rRNA and some of its associated proteins might help stabilize positioning of ribosome-bound tRNAs. In Mycoplasma capricolum subsp. capricolum (strain California kid / ATCC 27343 / NCTC 10154), this protein is Large ribosomal subunit protein uL5.